A 489-amino-acid polypeptide reads, in one-letter code: MATIFSGGSVSPFLFHTNKGTSFTPKAPILHLKRSFSAKSVASVGTEPSLSPAVQTFWKWLQEEGVITAKTPVKASVVTEGLGLVALKDISRNDVILQVPKRLWINPDAVAASEIGRVCSELKPWLSVILFLIRERSREDSVWKHYFGILPQETDSTIYWSEEELQELQGSQLLKTTVSVKEYVKNECLKLEQEIILPNKRLFPDPVTLDDFFWAFGILRSRAFSRLRNENLVVVPMADLINHSAGVTTEDHAYEVKGAAGLFSWDYLFSLKSPLSVKAGEQVYIQYDLNKSNAELALDYGFIEPNENRHAYTLTLEISESDPFFDDKLDVAESNGFAQTAYFDIFYNRTLPPGLLPYLRLVALGGTDAFLLESLFRDTIWGHLELSVSRDNEELLCKAVREACKSALAGYHTTIEQDRELKEGNLDSRLAIAVGIREGEKMVLQQIDGIFEQKELELDQLEYYQERRLKDLGLCGENGDILGDLGKFF.

The N-terminal 37 residues, 1-37 (MATIFSGGSVSPFLFHTNKGTSFTPKAPILHLKRSFS), are a transit peptide targeting the chloroplast. Residues 64-288 (EGVITAKTPV…AGEQVYIQYD (225 aa)) form the SET domain. S-adenosyl-L-methionine is bound by residues 80–82 (EGL) and R222. Substrate-binding residues include R222, R226, and D239. 242–243 (NH) is a binding site for S-adenosyl-L-methionine. Positions 254, 287, and 300 each coordinate substrate.

Belongs to the class V-like SAM-binding methyltransferase superfamily. Plant protein-lysine LSMT methyltransferase family. As to quaternary structure, homotrimer. As to expression, highly expressed in leaf.

It localises to the plastid. It is found in the chloroplast. The catalysed reaction is L-lysyl-[ribulose-1,5-bisphosphate carboxylase] + 3 S-adenosyl-L-methionine = N(6),N(6),N(6)-trimethyl-L-lysyl-[ribulose-1,5-bisphosphate carboxylase] + 3 S-adenosyl-L-homocysteine + 3 H(+). It catalyses the reaction [fructose-bisphosphate aldolase]-L-lysine + 3 S-adenosyl-L-methionine = [fructose-bisphosphate aldolase]-N(6),N(6),N(6)-trimethyl-L-lysine + 3 S-adenosyl-L-homocysteine + 3 H(+). In terms of biological role, methylates 'Lys-14' of the large subunit of RuBisCO. Can also use with lower efficiency chloroplastic fructose-bisphosphate aldolases and gamma-tocopherol methyltransferase as substrates, but not a cytosolic aldolase. In Pisum sativum (Garden pea), this protein is Ribulose-1,5 bisphosphate carboxylase/oxygenase large subunit N-methyltransferase, chloroplastic (RBCMT).